A 256-amino-acid chain; its full sequence is Thiazole synthase (256 aa).

Catalysis depends on K95, which acts as the Schiff-base intermediate with DXP. 1-deoxy-D-xylulose 5-phosphate is bound by residues G156, 183–184, and 205–206; these read AG and NT.

It belongs to the ThiG family. Homotetramer. Forms heterodimers with either ThiH or ThiS.

The protein localises to the cytoplasm. It catalyses the reaction [ThiS sulfur-carrier protein]-C-terminal-Gly-aminoethanethioate + 2-iminoacetate + 1-deoxy-D-xylulose 5-phosphate = [ThiS sulfur-carrier protein]-C-terminal Gly-Gly + 2-[(2R,5Z)-2-carboxy-4-methylthiazol-5(2H)-ylidene]ethyl phosphate + 2 H2O + H(+). It participates in cofactor biosynthesis; thiamine diphosphate biosynthesis. In terms of biological role, catalyzes the rearrangement of 1-deoxy-D-xylulose 5-phosphate (DXP) to produce the thiazole phosphate moiety of thiamine. Sulfur is provided by the thiocarboxylate moiety of the carrier protein ThiS. In vitro, sulfur can be provided by H(2)S. The polypeptide is Thiazole synthase (Gluconacetobacter diazotrophicus (strain ATCC 49037 / DSM 5601 / CCUG 37298 / CIP 103539 / LMG 7603 / PAl5)).